The chain runs to 249 residues: ATP synthase subunit a (249 aa).

Helical transmembrane passes span 35-55 (ILLTSWFVIALILLAAFISSL), 92-112 (VPFIGTLFLFIFVSNWSGALV), 131-151 (INTTVALALLTSIAYFYAGIS), 187-209 (LFGNILADELVVGVLVLLVPLFI), and 221-241 (SAIQALIFATLAANYIGEALE).

This sequence belongs to the ATPase A chain family. As to quaternary structure, F-type ATPases have 2 components, CF(1) - the catalytic core - and CF(0) - the membrane proton channel. CF(1) has five subunits: alpha(3), beta(3), gamma(1), delta(1), epsilon(1). CF(0) has four main subunits: a, b, b' and c.

It is found in the cellular thylakoid membrane. Functionally, key component of the proton channel; it plays a direct role in the translocation of protons across the membrane. This chain is ATP synthase subunit a, found in Trichodesmium erythraeum (strain IMS101).